We begin with the raw amino-acid sequence, 491 residues long: ATP-dependent protease ATPase subunit HslU (491 aa).

ATP is bound by residues isoleucine 34, 76 to 81 (GVGKTE), aspartate 296, glutamate 364, and arginine 436.

It belongs to the ClpX chaperone family. HslU subfamily. In terms of assembly, a double ring-shaped homohexamer of HslV is capped on each side by a ring-shaped HslU homohexamer. The assembly of the HslU/HslV complex is dependent on binding of ATP.

It localises to the cytoplasm. Functionally, ATPase subunit of a proteasome-like degradation complex; this subunit has chaperone activity. The binding of ATP and its subsequent hydrolysis by HslU are essential for unfolding of protein substrates subsequently hydrolyzed by HslV. HslU recognizes the N-terminal part of its protein substrates and unfolds these before they are guided to HslV for hydrolysis. This is ATP-dependent protease ATPase subunit HslU from Chlorobaculum tepidum (strain ATCC 49652 / DSM 12025 / NBRC 103806 / TLS) (Chlorobium tepidum).